We begin with the raw amino-acid sequence, 220 residues long: NADH-quinone oxidoreductase subunit I (220 aa).

2 4Fe-4S ferredoxin-type domains span residues 71-102 (LQRLLDSGSERCIGCGLCEKICTSNCIRIITH) and 112-141 (DSYTINLGRCIYCGLCAEVCPELAIVMGNR). [4Fe-4S] cluster is bound by residues Cys82, Cys85, Cys88, Cys92, Cys121, Cys124, Cys127, and Cys131. Residues 187–220 (MQATPLDYVQEPSKEESQEETPTNPESNKGDENV) form a disordered region.

This sequence belongs to the complex I 23 kDa subunit family. As to quaternary structure, NDH-1 is composed of 14 different subunits. Subunits NuoA, H, J, K, L, M, N constitute the membrane sector of the complex. The cofactor is [4Fe-4S] cluster.

It is found in the cell inner membrane. It catalyses the reaction a quinone + NADH + 5 H(+)(in) = a quinol + NAD(+) + 4 H(+)(out). Its function is as follows. NDH-1 shuttles electrons from NADH, via FMN and iron-sulfur (Fe-S) centers, to quinones in the respiratory chain. The immediate electron acceptor for the enzyme in this species is believed to be ubiquinone. Couples the redox reaction to proton translocation (for every two electrons transferred, four hydrogen ions are translocated across the cytoplasmic membrane), and thus conserves the redox energy in a proton gradient. The polypeptide is NADH-quinone oxidoreductase subunit I (Helicobacter pylori (strain ATCC 700392 / 26695) (Campylobacter pylori)).